The sequence spans 610 residues: MTETDLITVGENTDDTELTNAVTTDTPDVKATAATVSLGSLSTMVLPELRALANQAGVKGTSGMRKSELIAAIEECRGQANGTSVNDGPSRDHGGSATAISTEALAAQEEQNYAIVEVSRRERRGASREADVTAGTSTAEATESDCQGTADDDTRTLQGGQSDTKTEERGPDVGNDQGVEQQSSSLQPRGDDDGEGRQGRRGRRFRDRDRRRRGERSGDGAEAELRQDDVVQPVAGILDVLDNYAFVRTSGYLAGPHDVYVSMSMVRKNGLRRGDAVTGAVRVPREGEQGHQRQKFNPLVRLDSINGGSVEDAKKRPEFGKLTPLYPNQRLRLETTPDRLTTRVIDLIMPIGKGQRALIVSPPKAGKTTILQDIANAITRNNLECHLMVVLVDERPEEVTDMQRSVKGEVIASTFDRPPSDHTSVAELAIERAKRLVEQGKDVVVLLDSITRLGRAYNNASPASGRILSGGVDSTALYPPKRFLGAARNIEEGGSLTIIATAMVETGSTGDMVIFEEFKGTGNAELKLDRKIAERRVFPAVDVNPSGTRKDELLLSPDEFGIVHKLRRVLSGLDSHQAIDLLMSQLRKTKTNYEFLVQVSKTTPGSMDDD.

Residues 117-227 (EVSRRERRGA…GDGAEAELRQ (111 aa)) are disordered. Residues 118–131 (VSRRERRGASREAD) show a composition bias toward basic and acidic residues. The segment covering 178–187 (GVEQQSSSLQ) has biased composition (polar residues). Residues 189–198 (RGDDDGEGRQ) are compositionally biased toward basic and acidic residues. Over residues 199-214 (GRRGRRFRDRDRRRRG) the composition is skewed to basic residues. Residues 215–227 (ERSGDGAEAELRQ) show a composition bias toward basic and acidic residues. The Rho RNA-BD domain maps to 231-309 (VQPVAGILDV…VRLDSINGGS (79 aa)). Residues 352–357 (GKGQRA), 364–369 (KAGKTT), and arginine 395 each bind ATP.

This sequence belongs to the Rho family. As to quaternary structure, homohexamer. The homohexamer assembles into an open ring structure.

In terms of biological role, facilitates transcription termination by a mechanism that involves Rho binding to the nascent RNA, activation of Rho's RNA-dependent ATPase activity, and release of the mRNA from the DNA template. This chain is Transcription termination factor Rho, found in Mycobacterium leprae (strain TN).